Here is a 210-residue protein sequence, read N- to C-terminus: Large ribosomal subunit protein uL3 (210 aa).

Belongs to the universal ribosomal protein uL3 family. As to quaternary structure, part of the 50S ribosomal subunit. Forms a cluster with proteins L14 and L19.

In terms of biological role, one of the primary rRNA binding proteins, it binds directly near the 3'-end of the 23S rRNA, where it nucleates assembly of the 50S subunit. This Geobacter sulfurreducens (strain ATCC 51573 / DSM 12127 / PCA) protein is Large ribosomal subunit protein uL3.